A 78-amino-acid polypeptide reads, in one-letter code: Large ribosomal subunit protein bL28 (78 aa).

This sequence belongs to the bacterial ribosomal protein bL28 family.

The chain is Large ribosomal subunit protein bL28 from Psychrobacter arcticus (strain DSM 17307 / VKM B-2377 / 273-4).